A 198-amino-acid polypeptide reads, in one-letter code: MAEKQTAKRNRREEILQSLALMLESSDGSQRITTAKLAASVGVSEAALYRHFPSKTRMFDSLIEFIEDSLITRINLILKDEKDTSTRLRLIVLLILGFGERNPGLTRILTGHALMFEQDRLQGRINQLFERIEAQLRQVLREKRMREGEGYTTDENLLASQLLAFCEGMLSRFVRSEFKYRPTDDFDARWPLIAAQLQ.

Residues 10-70 (NRREEILQSL…SLIEFIEDSL (61 aa)) enclose the HTH tetR-type domain. The H-T-H motif DNA-binding region spans 33–52 (TTAKLAASVGVSEAALYRHF). The stretch at 117-144 (EQDRLQGRINQLFERIEAQLRQVLREKR) forms a coiled coil.

This sequence belongs to the nucleoid occlusion factor SlmA family. As to quaternary structure, homodimer. Interacts with FtsZ.

The protein resides in the cytoplasm. It is found in the nucleoid. Functionally, required for nucleoid occlusion (NO) phenomenon, which prevents Z-ring formation and cell division over the nucleoid. Acts as a DNA-associated cell division inhibitor that binds simultaneously chromosomal DNA and FtsZ, and disrupts the assembly of FtsZ polymers. SlmA-DNA-binding sequences (SBS) are dispersed on non-Ter regions of the chromosome, preventing FtsZ polymerization at these regions. This is Nucleoid occlusion factor SlmA from Salmonella paratyphi A (strain ATCC 9150 / SARB42).